The primary structure comprises 71 residues: Small ribosomal subunit protein bS18 (71 aa).

It belongs to the bacterial ribosomal protein bS18 family. In terms of assembly, part of the 30S ribosomal subunit. Forms a tight heterodimer with protein bS6.

Functionally, binds as a heterodimer with protein bS6 to the central domain of the 16S rRNA, where it helps stabilize the platform of the 30S subunit. This is Small ribosomal subunit protein bS18 from Microcystis aeruginosa (strain NIES-843 / IAM M-2473).